An 89-amino-acid polypeptide reads, in one-letter code: Small ribosomal subunit protein uS15 (89 aa).

Residues M1–S18 are compositionally biased toward basic and acidic residues. A disordered region spans residues M1–P25.

It belongs to the universal ribosomal protein uS15 family. As to quaternary structure, part of the 30S ribosomal subunit. Forms a bridge to the 50S subunit in the 70S ribosome, contacting the 23S rRNA.

Its function is as follows. One of the primary rRNA binding proteins, it binds directly to 16S rRNA where it helps nucleate assembly of the platform of the 30S subunit by binding and bridging several RNA helices of the 16S rRNA. Forms an intersubunit bridge (bridge B4) with the 23S rRNA of the 50S subunit in the ribosome. This chain is Small ribosomal subunit protein uS15, found in Teredinibacter turnerae (strain ATCC 39867 / T7901).